The chain runs to 228 residues: Cytochrome c oxidase subunit 2 (228 aa).

Residues 1–26 lie on the Mitochondrial intermembrane side of the membrane; that stretch reads MATWANLGLQNSSSPLMEQLNFFHDH. A helical transmembrane segment spans residues 27–48; it reads TVLILIMITVMITYVMGMLFFN. The Mitochondrial matrix portion of the chain corresponds to 49 to 62; it reads KFTNRYLLHGQTIE. Residues 63–82 form a helical membrane-spanning segment; the sequence is IIWTILPAIILMFIAFPSLR. At 83-228 the chain is on the mitochondrial intermembrane side; it reads LLYLLDEINS…FIKWVSSQLN (146 aa). Residues histidine 161, cysteine 196, glutamate 198, cysteine 200, histidine 204, and methionine 207 each coordinate Cu cation. Residue glutamate 198 participates in Mg(2+) binding.

The protein belongs to the cytochrome c oxidase subunit 2 family. As to quaternary structure, component of the cytochrome c oxidase (complex IV, CIV), a multisubunit enzyme composed of a catalytic core of 3 subunits and several supernumerary subunits. The complex exists as a monomer or a dimer and forms supercomplexes (SCs) in the inner mitochondrial membrane with ubiquinol-cytochrome c oxidoreductase (cytochrome b-c1 complex, complex III, CIII). Cu cation serves as cofactor.

It localises to the mitochondrion inner membrane. The enzyme catalyses 4 Fe(II)-[cytochrome c] + O2 + 8 H(+)(in) = 4 Fe(III)-[cytochrome c] + 2 H2O + 4 H(+)(out). Component of the cytochrome c oxidase, the last enzyme in the mitochondrial electron transport chain which drives oxidative phosphorylation. The respiratory chain contains 3 multisubunit complexes succinate dehydrogenase (complex II, CII), ubiquinol-cytochrome c oxidoreductase (cytochrome b-c1 complex, complex III, CIII) and cytochrome c oxidase (complex IV, CIV), that cooperate to transfer electrons derived from NADH and succinate to molecular oxygen, creating an electrochemical gradient over the inner membrane that drives transmembrane transport and the ATP synthase. Cytochrome c oxidase is the component of the respiratory chain that catalyzes the reduction of oxygen to water. Electrons originating from reduced cytochrome c in the intermembrane space (IMS) are transferred via the dinuclear copper A center (CU(A)) of subunit 2 and heme A of subunit 1 to the active site in subunit 1, a binuclear center (BNC) formed by heme A3 and copper B (CU(B)). The BNC reduces molecular oxygen to 2 water molecules using 4 electrons from cytochrome c in the IMS and 4 protons from the mitochondrial matrix. This Culex quinquefasciatus (Southern house mosquito) protein is Cytochrome c oxidase subunit 2 (COII).